The primary structure comprises 156 residues: Small ribosomal subunit protein uS7 (156 aa).

The protein belongs to the universal ribosomal protein uS7 family. In terms of assembly, part of the 30S ribosomal subunit. Contacts proteins S9 and S11.

Functionally, one of the primary rRNA binding proteins, it binds directly to 16S rRNA where it nucleates assembly of the head domain of the 30S subunit. Is located at the subunit interface close to the decoding center, probably blocks exit of the E-site tRNA. This is Small ribosomal subunit protein uS7 from Bacillus mycoides (strain KBAB4) (Bacillus weihenstephanensis).